A 130-amino-acid chain; its full sequence is Holo-[acyl-carrier-protein] synthase (130 aa).

Residues Asp-9 and Glu-58 each contribute to the Mg(2+) site.

It belongs to the P-Pant transferase superfamily. AcpS family. It depends on Mg(2+) as a cofactor.

Its subcellular location is the cytoplasm. The catalysed reaction is apo-[ACP] + CoA = holo-[ACP] + adenosine 3',5'-bisphosphate + H(+). Functionally, transfers the 4'-phosphopantetheine moiety from coenzyme A to a Ser of acyl-carrier-protein. The sequence is that of Holo-[acyl-carrier-protein] synthase from Mycobacterium leprae (strain Br4923).